Reading from the N-terminus, the 691-residue chain is Elongation factor G (691 aa).

In terms of domain architecture, tr-type G spans 8 to 282 (ERVRNIGIAA…AVVDYLPAPI (275 aa)). Residues 17 to 24 (AHIDAGKT), 81 to 85 (DTPGH), and 135 to 138 (NKMD) contribute to the GTP site.

The protein belongs to the TRAFAC class translation factor GTPase superfamily. Classic translation factor GTPase family. EF-G/EF-2 subfamily.

It localises to the cytoplasm. Its function is as follows. Catalyzes the GTP-dependent ribosomal translocation step during translation elongation. During this step, the ribosome changes from the pre-translocational (PRE) to the post-translocational (POST) state as the newly formed A-site-bound peptidyl-tRNA and P-site-bound deacylated tRNA move to the P and E sites, respectively. Catalyzes the coordinated movement of the two tRNA molecules, the mRNA and conformational changes in the ribosome. The protein is Elongation factor G of Synechococcus sp. (strain CC9902).